The following is a 419-amino-acid chain: Gamma-glutamyl phosphate reductase (419 aa).

The protein belongs to the gamma-glutamyl phosphate reductase family.

It localises to the cytoplasm. It catalyses the reaction L-glutamate 5-semialdehyde + phosphate + NADP(+) = L-glutamyl 5-phosphate + NADPH + H(+). It participates in amino-acid biosynthesis; L-proline biosynthesis; L-glutamate 5-semialdehyde from L-glutamate: step 2/2. In terms of biological role, catalyzes the NADPH-dependent reduction of L-glutamate 5-phosphate into L-glutamate 5-semialdehyde and phosphate. The product spontaneously undergoes cyclization to form 1-pyrroline-5-carboxylate. The sequence is that of Gamma-glutamyl phosphate reductase from Nitratidesulfovibrio vulgaris (strain ATCC 29579 / DSM 644 / CCUG 34227 / NCIMB 8303 / VKM B-1760 / Hildenborough) (Desulfovibrio vulgaris).